Reading from the N-terminus, the 548-residue chain is 5-epi-aristolochene synthase 1 (548 aa).

Asp-301, Asp-305, Asp-444, Thr-448, and Glu-452 together coordinate Mg(2+). A DDXXD motif motif is present at residues 301–305 (DDTFD).

Belongs to the terpene synthase family. In terms of assembly, monomer. The cofactor is Mg(2+). Expressed in roots, but not in shoots.

It localises to the cytoplasm. It catalyses the reaction (2E,6E)-farnesyl diphosphate = (+)-5-epi-aristolochene + diphosphate. The protein operates within secondary metabolite biosynthesis; terpenoid biosynthesis. In terms of biological role, catalyzes the cyclization of trans,trans-farnesyl diphosphate (FPP) to the bicyclic intermediate 5-epi-aristolochene, initial step in the conversion of FPP to the sesquiterpenoid antifungal phytoalexin capsidiol. Produces germacrene A as an enzyme-bound intermediate that is not released by the enzyme, but is further cyclized to produce the bicyclic 5-epi-aristolochene. The sequence is that of 5-epi-aristolochene synthase 1 (EAS) from Nicotiana attenuata (Coyote tobacco).